A 523-amino-acid chain; its full sequence is GMP synthase [glutamine-hydrolyzing] (523 aa).

The 198-residue stretch at 8-205 (KILILDFGSQ…VVDICGCETN (198 aa)) folds into the Glutamine amidotransferase type-1 domain. Cys-85 acts as the Nucleophile in catalysis. Catalysis depends on residues His-179 and Glu-181. In terms of domain architecture, GMPS ATP-PPase spans 206 to 398 (WTAENIIEDA…LGLPAEMLNR (193 aa)). 233–239 (SGGVDSS) provides a ligand contact to ATP.

As to quaternary structure, homodimer.

It catalyses the reaction XMP + L-glutamine + ATP + H2O = GMP + L-glutamate + AMP + diphosphate + 2 H(+). Its pathway is purine metabolism; GMP biosynthesis; GMP from XMP (L-Gln route): step 1/1. In terms of biological role, catalyzes the synthesis of GMP from XMP. This Histophilus somni (strain 129Pt) (Haemophilus somnus) protein is GMP synthase [glutamine-hydrolyzing].